The chain runs to 252 residues: tRNA pseudouridine synthase A (252 aa).

Catalysis depends on Asp-52, which acts as the Nucleophile. Tyr-111 is a binding site for substrate.

This sequence belongs to the tRNA pseudouridine synthase TruA family. Homodimer.

The catalysed reaction is uridine(38/39/40) in tRNA = pseudouridine(38/39/40) in tRNA. In terms of biological role, formation of pseudouridine at positions 38, 39 and 40 in the anticodon stem and loop of transfer RNAs. The polypeptide is tRNA pseudouridine synthase A (Methylorubrum populi (strain ATCC BAA-705 / NCIMB 13946 / BJ001) (Methylobacterium populi)).